The primary structure comprises 501 residues: Aldehyde dehydrogenase 1A1 (501 aa).

N-acetylserine is present on Ser2. Lys91 and Lys128 each carry N6-acetyllysine. Residues Leu167–Asn170, Lys193–Glu196, Gly226–Pro227, and Gly246–Ser247 contribute to the NAD(+) site. Lys252 carries the post-translational modification N6-acetyllysine. The active-site Proton acceptor is Glu269. Glu269 to Gly271 contributes to the NAD(+) binding site. The Nucleophile role is filled by Cys303. A mediates interaction with PRMT3 region spans residues Leu336–Ser501. The residue at position 337 (Thr337) is a Phosphothreonine. Glu349–Lys353 serves as a coordination point for NAD(+). Residues Lys353 and Lys367 each carry the N6-acetyllysine modification. Glu400–Phe402 contacts NAD(+). The residue at position 410 (Lys410) is an N6-acetyllysine. A Phosphoserine modification is found at Ser413. 3 positions are modified to N6-acetyllysine: Lys419, Lys435, and Lys495.

This sequence belongs to the aldehyde dehydrogenase family. In terms of assembly, homotetramer. Interacts with PRMT3; the interaction is direct, inhibits ALDH1A1 aldehyde dehydrogenase activity and is independent of the methyltransferase activity of PRMT3. In terms of processing, the N-terminus is blocked most probably by acetylation.

The protein resides in the cytoplasm. It is found in the cytosol. The protein localises to the cell projection. Its subcellular location is the axon. The catalysed reaction is an aldehyde + NAD(+) + H2O = a carboxylate + NADH + 2 H(+). The enzyme catalyses all-trans-retinal + NAD(+) + H2O = all-trans-retinoate + NADH + 2 H(+). It carries out the reaction 9-cis-retinal + NAD(+) + H2O = 9-cis-retinoate + NADH + 2 H(+). It catalyses the reaction 11-cis-retinal + NAD(+) + H2O = 11-cis-retinoate + NADH + 2 H(+). The catalysed reaction is 13-cis-retinal + NAD(+) + H2O = 13-cis-retinoate + NADH + 2 H(+). The enzyme catalyses 3-deoxyglucosone + NAD(+) + H2O = 2-dehydro-3-deoxy-D-gluconate + NADH + 2 H(+). It carries out the reaction (E)-4-hydroxynon-2-enal + NAD(+) + H2O = (E)-4-hydroxynon-2-enoate + NADH + 2 H(+). It catalyses the reaction malonaldehyde + NAD(+) + H2O = 3-oxopropanoate + NADH + 2 H(+). The catalysed reaction is hexanal + NAD(+) + H2O = hexanoate + NADH + 2 H(+). The enzyme catalyses propanal + NAD(+) + H2O = propanoate + NADH + 2 H(+). It carries out the reaction acetaldehyde + NAD(+) + H2O = acetate + NADH + 2 H(+). It catalyses the reaction benzaldehyde + NAD(+) + H2O = benzoate + NADH + 2 H(+). The catalysed reaction is 4-aminobutanal + NAD(+) + H2O = 4-aminobutanoate + NADH + 2 H(+). It functions in the pathway cofactor metabolism; retinol metabolism. Its function is as follows. Cytosolic dehydrogenase that catalyzes the irreversible oxidation of a wide range of aldehydes to their corresponding carboxylic acid. Functions downstream of retinol dehydrogenases and catalyzes the oxidation of retinaldehyde into retinoic acid, the second step in the oxidation of retinol/vitamin A into retinoic acid. This pathway is crucial to control the levels of retinol and retinoic acid, two important molecules which excess can be teratogenic and cytotoxic. Also oxidizes aldehydes resulting from lipid peroxidation like (E)-4-hydroxynon-2-enal/HNE, malonaldehyde and hexanal that form protein adducts and are highly cytotoxic. By participating for instance to the clearance of (E)-4-hydroxynon-2-enal/HNE in the lens epithelium prevents the formation of HNE-protein adducts and lens opacification. Also functions downstream of fructosamine-3-kinase in the fructosamine degradation pathway by catalyzing the oxidation of 3-deoxyglucosone, the carbohydrate product of fructosamine 3-phosphate decomposition, which is itself a potent glycating agent that may react with lysine and arginine side-chains of proteins. Also has an aminobutyraldehyde dehydrogenase activity and is probably part of an alternative pathway for the biosynthesis of GABA/4-aminobutanoate in midbrain, thereby playing a role in GABAergic synaptic transmission. This Equus caballus (Horse) protein is Aldehyde dehydrogenase 1A1.